A 264-amino-acid chain; its full sequence is MIVVKIGGRVVKNSLDKIILDILNINDKVILVHGGGDIVTDYTKRLGIEPVFVTSPEGIRSRYTTKEELEVYIMAMSLINKSITSKLCSLGKNAIGITGVDGGLLLAERKKRIVVIDERGKKRIIEGGYTGKVKEVRSEIINHLVKLFDIIVVSPIALDVEERTPLNIDGDQAAFAISKALRANVLILLSDVEGVLVEGKVINRLTPSEAKELSKKIGPGMNRKLLMAAESVENGVNKVIIGSGVKDRPIINALELNGTVIANG.

Residues G35–G36, R62, and N167 contribute to the substrate site.

It belongs to the acetylglutamate kinase family. LysZ subfamily.

The protein localises to the cytoplasm. The enzyme catalyses [amino-group carrier protein]-C-terminal-N-(1,4-dicarboxybutan-1-yl)-L-glutamine + ATP = [amino-group carrier protein]-C-terminal-N-(1-carboxy-5-phosphooxy-5-oxopentan-1-yl)-L-glutamine + ADP. It carries out the reaction [amino-group carrier protein]-C-terminal-gamma-(L-glutamyl)-L-glutamate + ATP = [amino-group carrier protein]-C-terminal-gamma-(5-phospho-L-glutamyl)-L-glutamate + ADP. The protein operates within amino-acid biosynthesis; L-lysine biosynthesis via AAA pathway; L-lysine from L-alpha-aminoadipate (Thermus route): step 2/5. It functions in the pathway amino-acid biosynthesis; L-arginine biosynthesis. Involved in both the arginine and lysine biosynthetic pathways. Phosphorylates the LysW-bound precursors glutamate (for arginine biosynthesis), respectively alpha-aminoadipate (for lysine biosynthesis). In Saccharolobus solfataricus (strain ATCC 35092 / DSM 1617 / JCM 11322 / P2) (Sulfolobus solfataricus), this protein is [LysW]-aminoadipate/[LysW]-glutamate kinase.